The chain runs to 439 residues: Xaa-Pro dipeptidase (439 aa).

Asp-244, Asp-255, His-335, Glu-380, and Glu-419 together coordinate Mn(2+).

This sequence belongs to the peptidase M24B family. Bacterial-type prolidase subfamily. Requires Mn(2+) as cofactor.

It catalyses the reaction Xaa-L-Pro dipeptide + H2O = an L-alpha-amino acid + L-proline. Its function is as follows. Splits dipeptides with a prolyl residue in the C-terminal position. In Shewanella sp. (strain ANA-3), this protein is Xaa-Pro dipeptidase.